Reading from the N-terminus, the 466-residue chain is Probable agmatine/putrescine antiporter AguD (466 aa).

Helical transmembrane passes span 8-28 (FSLF…EAAA), 30-50 (VAAI…AFLL), 85-105 (ASWF…VLCP), 120-140 (ISLL…LYPV), 144-164 (VWIL…LGGL), 192-212 (LSFI…CTFA), 226-246 (IIIG…GIGV), 273-293 (WFIS…MVSW), 325-345 (WGAA…APLL), 350-370 (LFWS…IPVF), 398-418 (VYMA…AIPL), and 426-446 (TEQL…ELII).

It belongs to the amino acid-polyamine-organocation (APC) superfamily. Glutamate:GABA antiporter (GGA) (TC 2.A.3.7) family.

It localises to the cell membrane. Probably catalyzes agmatine/putrescine exchange. The sequence is that of Probable agmatine/putrescine antiporter AguD from Lactococcus lactis subsp. lactis (strain IL1403) (Streptococcus lactis).